A 467-amino-acid chain; its full sequence is Ergochrome gene cluster transcriptional coactivator CPUR_05432 (467 aa).

Residues 109-179 (IAIQCEMLGS…RRGYVAHTPL (71 aa)) form the HTH iclR-type domain. Positions 139 to 158 (IQDVANLSNVPEQQLAQMIG) form a DNA-binding region, H-T-H motif.

Its subcellular location is the nucleus. Transcriptional coactivator; part of the gene cluster responsible for the typical purple-black color of the ergot sclerotia. The ergochrome gene cluster produces several ergot pigments including the yellow ergochrome secalonic acid and its derivatives, as well as the red anthraquinones endocrocin and clavorubin. With CPUR_05433, coregulates the production of geodin. In Claviceps purpurea (strain 20.1) (Ergot fungus), this protein is Ergochrome gene cluster transcriptional coactivator CPUR_05432.